A 458-amino-acid polypeptide reads, in one-letter code: tRNA modification GTPase MnmE (458 aa).

3 residues coordinate (6S)-5-formyl-5,6,7,8-tetrahydrofolate: Arg-26, Glu-88, and Arg-127. The TrmE-type G domain maps to 224–378 (GLSTAIIGRP…IEERINDIFF (155 aa)). Position 234 (Asn-234) interacts with K(+). Residues 234-239 (NVGKSS), 253-259 (TDIEGTT), and 278-281 (DTAG) contribute to the GTP site. A Mg(2+)-binding site is contributed by Ser-238. 3 residues coordinate K(+): Thr-253, Ile-255, and Thr-258. Thr-259 serves as a coordination point for Mg(2+). Residue Lys-458 coordinates (6S)-5-formyl-5,6,7,8-tetrahydrofolate.

The protein belongs to the TRAFAC class TrmE-Era-EngA-EngB-Septin-like GTPase superfamily. TrmE GTPase family. Homodimer. Heterotetramer of two MnmE and two MnmG subunits. The cofactor is K(+).

The protein resides in the cytoplasm. Functionally, exhibits a very high intrinsic GTPase hydrolysis rate. Involved in the addition of a carboxymethylaminomethyl (cmnm) group at the wobble position (U34) of certain tRNAs, forming tRNA-cmnm(5)s(2)U34. The chain is tRNA modification GTPase MnmE from Streptococcus agalactiae serotype Ia (strain ATCC 27591 / A909 / CDC SS700).